The following is a 520-amino-acid chain: MHVLSNPKHVTWLTQMGLDQIGEAYWQLGVPELVEHAIHNSEGVLSAEGALVCSTGKFTGRSPQDKFIVEDEKTRDTIWWGPVNNPFDSKQFDALYEKVTQFLQGKRVYIRDGYASALPEYKLNLRTVTTQSWTNLFVNNLFLRPIDKELTKFSPDFLILQVPEFQADPHVDGTKNANFTIINFTKRVILIGGTGFAGEIKKAVFTVLNYLLPQEHQVLPMHCSANVGTDGNTAIYFGLSGTGKTTLSADPNRKLIGDDEHGWCDKGIFNFEGGCYAKTINLAKESEPQIFDAIKFGTIVENMRFFAGTRTIDYKDSSITENVRCAYPLEYIPGALIPSIGSIPKHIFFLSCDAYGVLPPISQLDKDQAIHYFLSGYTAKIAGTEAGISAPKAVFSACFGAPFLPLHPTRYATMLADKLEKYEVTVWLVNTGWIGGGYGIGKRIDLNYTRAMVTAALSGELAKAGFEKDAIFNLSIPNACPEVPTHILNPSNTWNSVKEYELEAHKLMEAFASNFALYCD.

Substrate is bound by residues Arg61, Phe196, and Lys202. Residues Lys202, His222, and 238-246 each bind ATP; that span reads GLSGTGKTT. Mn(2+)-binding residues include Lys202 and His222. Residue Asp259 coordinates Mn(2+). Residues Glu287, Arg324, 443 to 444, and Thr449 each bind ATP; that span reads RI. Arg324 serves as a coordination point for substrate.

This sequence belongs to the phosphoenolpyruvate carboxykinase (ATP) family. The cofactor is Mn(2+).

Its subcellular location is the cytoplasm. It carries out the reaction oxaloacetate + ATP = phosphoenolpyruvate + ADP + CO2. It functions in the pathway carbohydrate biosynthesis; gluconeogenesis. In terms of biological role, involved in the gluconeogenesis. Catalyzes the conversion of oxaloacetate (OAA) to phosphoenolpyruvate (PEP) through direct phosphoryl transfer between the nucleoside triphosphate and OAA. The sequence is that of Phosphoenolpyruvate carboxykinase (ATP) from Amoebophilus asiaticus (strain 5a2).